A 255-amino-acid chain; its full sequence is uncharacterized protein (255 aa).

The protein belongs to the methyltransferase superfamily.

This is an uncharacterized protein from Mycobacterium ulcerans (strain Agy99).